Reading from the N-terminus, the 344-residue chain is Zinc metalloproteinase nas-6 (344 aa).

Positions 1–19 (MLDHVLLLTYCLVSTVVRS) are cleaved as a signal peptide. The 195-residue stretch at 72–266 (NALKNKQLTW…VKINKLYSCK (195 aa)) folds into the Peptidase M12A domain. 5 cysteine pairs are disulfide-bonded: cysteine 114-cysteine 265, cysteine 135-cysteine 154, cysteine 300-cysteine 334, cysteine 307-cysteine 327, and cysteine 314-cysteine 331. Histidine 162 contributes to the Zn(2+) binding site. The active site involves glutamate 163. The Zn(2+) site is built by histidine 166 and histidine 172. Residues 300 to 334 (CVDHFADCPHFAQYCTRASFFFVMKSYCPFTCKHC) enclose the ShKT domain.

Zn(2+) serves as cofactor. Expressed in pharyngeal and body wall muscles, intestine, hypodermis and pharyngeal mc2 cells.

It is found in the secreted. Functionally, metalloprotease. This chain is Zinc metalloproteinase nas-6 (nas-6), found in Caenorhabditis elegans.